Here is a 501-residue protein sequence, read N- to C-terminus: uncharacterized protein (501 aa).

It belongs to the UbiD family.

This is an uncharacterized protein from Synechocystis sp. (strain ATCC 27184 / PCC 6803 / Kazusa).